The primary structure comprises 289 residues: MMQRDRWFRCRLSSYQTHRLPPPSEDSVPIATMERTPGLLECEHLNMHYVSEVRSIPSCAPFVVLQEWPMWWDMILSKWEKHVCKIYMRVCVCCATINVDFNQIVRGFERWTIHCHCIKPGSLQCKAGGVVLANWFKMMIYGSLYNLRFPWYREIVNCGMPKEVLFMGSVFVRGRHFIYIRLLYDGHAAIVLERMSFGWSFFSYGIMNNMVVLGCTYCKNLDELSVRCCARRTRRLLAKAVKVLGSFTVRSLMRSLVEPRRQGLLRGLMERYCPFTLADYNRGENPWRA.

The protein belongs to the adenoviridae E4 30 to 34 kDa protein family. In terms of assembly, interacts with E1B-55k.

The protein resides in the host nucleus. It localises to the host cytoplasm. In terms of biological role, plays a major role to prevent cellular inhibition of viral genome replication by nuclear bodies. Assembles an SCF-like E3 ubiquitin ligase complex based on the cellular proteins ELOB, ELOC, CUL5 and RBX1, in cooperation with viral E1B-55K. This viral RING-type ligase ubiquitinates cellular substrates prior to proteasomal degradation: p53/TP53, LIG4, MRE11-RAD50-NBS1 (MRN) complex, ITGA3, DAXX and BLM. This is Early E4 34 kDa protein from Human adenovirus F serotype 40 (HAdV-40).